The following is a 437-amino-acid chain: Indole diterpene prenyltransferase anaPT (437 aa).

The interval 1-28 (MSPLSMQTDSVQGTAENKSLETNGTSND) is disordered. L-tryptophan-binding positions include 102–103 (GF) and Glu111. Dimethylallyl diphosphate-binding residues include Arg124, Lys208, Tyr210, Tyr282, Gln355, Tyr357, Tyr422, and Tyr426.

The protein belongs to the tryptophan dimethylallyltransferase family.

It catalyses the reaction (R)-benzodiazepinedione + dimethylallyl diphosphate = (2R,3S,11R)-aszonalenin + diphosphate. It carries out the reaction (S)-benzodiazepinedione + dimethylallyl diphosphate = (2R,3S,11S)-aszonalenin + diphosphate. It functions in the pathway alkaloid biosynthesis. Its function is as follows. Indole diterpene prenyltransferase; part of the gene cluster that mediates the biosynthesis of the prenylated pyrroloindoline diketopiperazine acetylaszonalenin. The first step in the pathway is the formation of (R)-benzodiazepinedione by condensation of tryptophan and anthranilic acid catalyzed by the non-ribosomal peptide synthetase anaPS. The prenyltransferase anaPT then converts (R)-benzodiazepinedione to aszonalenin in the presence of dimethylallyl diphosphate (DMAPP) via C3-prenylation. The last step in the biosynthesis of acetylaszonalenin via acetylation of aszonalenin at position N1 catalyzed by anaAT. In Neosartorya fischeri (strain ATCC 1020 / DSM 3700 / CBS 544.65 / FGSC A1164 / JCM 1740 / NRRL 181 / WB 181) (Aspergillus fischerianus), this protein is Indole diterpene prenyltransferase anaPT.